Reading from the N-terminus, the 158-residue chain is S-ribosylhomocysteine lyase (158 aa).

Fe cation is bound by residues H56, H60, and C125.

It belongs to the LuxS family. As to quaternary structure, homodimer. The cofactor is Fe cation.

The catalysed reaction is S-(5-deoxy-D-ribos-5-yl)-L-homocysteine = (S)-4,5-dihydroxypentane-2,3-dione + L-homocysteine. Its function is as follows. Involved in the synthesis of autoinducer 2 (AI-2) which is secreted by bacteria and is used to communicate both the cell density and the metabolic potential of the environment. The regulation of gene expression in response to changes in cell density is called quorum sensing. Catalyzes the transformation of S-ribosylhomocysteine (RHC) to homocysteine (HC) and 4,5-dihydroxy-2,3-pentadione (DPD). In Leuconostoc citreum (strain KM20), this protein is S-ribosylhomocysteine lyase.